We begin with the raw amino-acid sequence, 748 residues long: Structure-specific endonuclease subunit SLX4 (748 aa).

A compositionally biased stretch (polar residues) spans 62 to 75 (KSVTAQKSPMTQET). Residues 62–104 (KSVTAQKSPMTQETTKNDTERNKDVDKSCNPVSTSHPDLGGSN) are disordered. Thr72 bears the Phosphothreonine; by ATR and ATM mark. Residues 76-88 (TKNDTERNKDVDK) are compositionally biased toward basic and acidic residues. At Thr113 the chain carries Phosphothreonine; by ATR and ATM. Disordered stretches follow at residues 215–236 (IKTQNEGNSDKPPRARNNKGEK) and 277–303 (EKSSNSLDNQESSQQRLWTASQLPPEL). Residues 222–236 (NSDKPPRARNNKGEK) show a composition bias toward basic and acidic residues. The segment covering 277 to 298 (EKSSNSLDNQESSQQRLWTASQ) has biased composition (polar residues). Residue Ser289 is modified to Phosphoserine; by ATR and ATM. Thr319 bears the Phosphothreonine; by ATR and ATM mark. A phosphoserine; by ATR and ATM mark is found at Ser329 and Ser355. Residues 591-602 (ISTKDSTQNPTT) show a composition bias toward polar residues. The segment at 591–610 (ISTKDSTQNPTTSNDIIDTS) is disordered.

Belongs to the SLX4 family. As to quaternary structure, forms a heterodimer with SLX1. Interacts with RAD1; catalytic subunit of the RAD1-RAD10 endonuclease. Interacts with RTT107. Phosphorylated by ATR (MEC1) and ATM (TEL1) upon DNA damage. This appears to be required for the function with the RAD1-RAD10 endonuclease.

Its subcellular location is the nucleus. It localises to the cytoplasm. Its function is as follows. Regulatory subunit that interacts with and increases the activity of different structure-specific endonucleases. Has several distinct roles in protecting genome stability by resolving diverse forms of deleterious DNA structures. Component of the SLX1-SLX4 structure-specific endonuclease that resolves DNA secondary structures generated during DNA repair and recombination. Has endonuclease activity towards branched DNA substrates, introducing single-strand cuts in duplex DNA close to junctions with ss-DNA. Has a preference for simple Y, 5'-flap and replication fork-like structures. It cleaves the strand bearing the 5'-non-homologous arm at the branch site junction and generates ligatable, nicked products from the 5'-flap or replication fork substrates. Plays a critical role in maintaining the integrity of the ribosomal DNA (rDNA) loci, where it has a role in re-starting stalled replication forks. Has Holliday junction resolvase activity in vitro. Interacts with the structure-specific RAD1-RAD10 endonuclease and promotes RAD1-RAD10-dependent 3'-non-homologous tail removal (NHTR) during repair of double-strand breaks by single-strand annealing. SLX4 also promotes recovery from DNA-alkylation-induced replisome stalling during DNA replication by facilitating the error-free mode of lesion bypass. This does not require SLX1 or RAD1-RAD10, but probably RTT107. The polypeptide is Structure-specific endonuclease subunit SLX4 (Saccharomyces cerevisiae (strain RM11-1a) (Baker's yeast)).